The sequence spans 208 residues: Uracil phosphoribosyltransferase (208 aa).

5-phospho-alpha-D-ribose 1-diphosphate contacts are provided by residues arginine 78, arginine 103, and 130 to 138 (DPMLATGGS). Uracil is bound by residues isoleucine 193 and 198-200 (GDA). Aspartate 199 provides a ligand contact to 5-phospho-alpha-D-ribose 1-diphosphate.

This sequence belongs to the UPRTase family. Requires Mg(2+) as cofactor.

It catalyses the reaction UMP + diphosphate = 5-phospho-alpha-D-ribose 1-diphosphate + uracil. The protein operates within pyrimidine metabolism; UMP biosynthesis via salvage pathway; UMP from uracil: step 1/1. Its activity is regulated as follows. Allosterically activated by GTP. Catalyzes the conversion of uracil and 5-phospho-alpha-D-ribose 1-diphosphate (PRPP) to UMP and diphosphate. This is Uracil phosphoribosyltransferase from Aliivibrio salmonicida (strain LFI1238) (Vibrio salmonicida (strain LFI1238)).